Consider the following 200-residue polypeptide: MEKFTTLEGVAAPLRTINVDTDRIIPAKYLKTIRRTGLGKSLFAEMRYREDGSENPDFILNQPAYRNSKILVCGDNFGCGSSREHAPWALADFGIRCVISTSFADIFFNNCAKNGILAIVVSPEDLEKLFEDAERGANATLTVDLAAQTIRGPDGGTLHFDVDEGRKHNLLNGLDEIGLTLERVSSIDAYEQKLAQRTWA.

This sequence belongs to the LeuD family. LeuD type 1 subfamily. In terms of assembly, heterodimer of LeuC and LeuD.

The enzyme catalyses (2R,3S)-3-isopropylmalate = (2S)-2-isopropylmalate. The protein operates within amino-acid biosynthesis; L-leucine biosynthesis; L-leucine from 3-methyl-2-oxobutanoate: step 2/4. Its function is as follows. Catalyzes the isomerization between 2-isopropylmalate and 3-isopropylmalate, via the formation of 2-isopropylmaleate. This chain is 3-isopropylmalate dehydratase small subunit, found in Methylobacterium radiotolerans (strain ATCC 27329 / DSM 1819 / JCM 2831 / NBRC 15690 / NCIMB 10815 / 0-1).